The sequence spans 101 residues: MAKESMKAREAKRAKLVAKFAEKRAALKVIISDVNASEEDRWNAVLKLQSLPRDSSSSRQRNRCNQTGRPHGYLRKFGLSRIKVRETCMKGEIPGLRKASW.

It belongs to the universal ribosomal protein uS14 family. In terms of assembly, part of the 30S ribosomal subunit. Contacts proteins S3 and S10.

In terms of biological role, binds 16S rRNA, required for the assembly of 30S particles and may also be responsible for determining the conformation of the 16S rRNA at the A site. This chain is Small ribosomal subunit protein uS14, found in Photobacterium profundum (strain SS9).